A 291-amino-acid chain; its full sequence is Undecaprenyl-diphosphatase (291 aa).

8 consecutive transmembrane segments (helical) span residues 1–21, 48–68, 102–122, 126–146, 162–182, 203–223, 236–256, and 267–287; these read MFII…LTEF, SAFT…AWVF, LHVL…DDFI, LFSV…MIIA, INYF…WPGF, SDFT…LSLL, FYIL…KTFL, and FAIY…GFGI.

It belongs to the UppP family.

The protein localises to the cell membrane. The catalysed reaction is di-trans,octa-cis-undecaprenyl diphosphate + H2O = di-trans,octa-cis-undecaprenyl phosphate + phosphate + H(+). Catalyzes the dephosphorylation of undecaprenyl diphosphate (UPP). Confers resistance to bacitracin. The chain is Undecaprenyl-diphosphatase from Staphylococcus aureus (strain MSSA476).